Reading from the N-terminus, the 562-residue chain is Tissue-type plasminogen activator (562 aa).

A signal peptide spans 1 to 19; sequence MYALKRELWCVLLLCGAIC. The propeptide occupies 20 to 32; sequence TSPSQETHRRLRR. Positions 33–35 are cleaved as a propeptide — removed by plasmin; it reads GVR. Residues 39–81 form the Fibronectin type-I domain; sequence VTCRDEKTQMIYQQHQSWLRPLLRGNRVEHCWCNDGQTQCHSV. Cystine bridges form between Cys-41-Cys-71, Cys-69-Cys-78, Cys-86-Cys-97, Cys-91-Cys-108, Cys-110-Cys-119, Cys-127-Cys-208, Cys-148-Cys-190, Cys-179-Cys-203, Cys-215-Cys-296, Cys-236-Cys-278, Cys-267-Cys-291, Cys-299-Cys-430, Cys-342-Cys-358, Cys-350-Cys-419, Cys-444-Cys-519, Cys-476-Cys-492, and Cys-509-Cys-537. Residues 42-52 form an important for binding to annexin A2 region; the sequence is RDEKTQMIYQQ. An EGF-like domain is found at 82 to 120; the sequence is PVKSCSEPRCFNGGTCLQAIYFSDFVCQCPVGFIGRQCE. O-linked (Fuc) threonine glycosylation is present at Thr-96. Kringle domains are found at residues 126–208 and 214–296; these read TCYE…TPAC and ECYT…LPQC. N-linked (GlcNAc...) asparagine glycosylation is present at Asn-152. The Peptidase S1 domain maps to 311-561; sequence IKGGLYADIT…YLNWIRDNTR (251 aa). Active-site charge relay system residues include His-357 and Asp-406. N-linked (GlcNAc...) asparagine glycosylation is present at Asn-483. The active-site Charge relay system is Ser-513.

It belongs to the peptidase S1 family. In terms of assembly, heterodimer of chain A and chain B held by a disulfide bond. Binds to fibrin with high affinity. This interaction leads to an increase in the catalytic efficiency of the enzyme due to an increase in affinity for plasminogen. Similarly, binding to heparin increases the activation of plasminogen. Binds to annexin A2, cytokeratin-8, fibronectin and laminin. Binds to mannose receptor and the low-density lipoprotein receptor-related protein (LRP1); these proteins are involved in TPA clearance. Binds LRP1B; binding is followed by internalization and degradation. Forms heterodimer with SERPINA5. Interacts with SERPINE1. In complex with SERPINE1, interacts with SORL1. The single chain, almost fully active enzyme, can be further processed into a two-chain fully active form by a cleavage after Arg-310 catalyzed by plasmin, tissue kallikrein or factor Xa.

It localises to the secreted. The protein localises to the extracellular space. It carries out the reaction Specific cleavage of Arg-|-Val bond in plasminogen to form plasmin.. Inhibited by SERPINA5. Inhibited by SERPINE1. In terms of biological role, converts the abundant, but inactive, zymogen plasminogen to plasmin by hydrolyzing a single Arg-Val bond in plasminogen. By controlling plasmin-mediated proteolysis, it plays an important role in tissue remodeling and degradation, in cell migration and many other physiopathological events. During oocyte activation, plays a role in cortical granule reaction in the zona reaction, which contributes to the block to polyspermy. The chain is Tissue-type plasminogen activator (PLAT) from Sus scrofa (Pig).